The primary structure comprises 518 residues: 3-octaprenyl-4-hydroxybenzoate carboxy-lyase (518 aa).

Asn177 provides a ligand contact to Mn(2+). Prenylated FMN is bound by residues 180–182, 194–196, and 199–200; these read IYR, RWL, and RG. Glu243 contacts Mn(2+). The active-site Proton donor is Asp318.

The protein belongs to the UbiD family. In terms of assembly, homohexamer. Requires prenylated FMN as cofactor. The cofactor is Mn(2+).

Its subcellular location is the cell membrane. It catalyses the reaction a 4-hydroxy-3-(all-trans-polyprenyl)benzoate + H(+) = a 2-(all-trans-polyprenyl)phenol + CO2. It participates in cofactor biosynthesis; ubiquinone biosynthesis. In terms of biological role, catalyzes the decarboxylation of 3-octaprenyl-4-hydroxy benzoate to 2-octaprenylphenol, an intermediate step in ubiquinone biosynthesis. The chain is 3-octaprenyl-4-hydroxybenzoate carboxy-lyase from Burkholderia orbicola (strain AU 1054).